The primary structure comprises 664 residues: PAN2-PAN3 deadenylation complex subunit PAN3 (664 aa).

Disordered stretches follow at residues 1–27 and 54–134; these read MATT…GREN and DPHK…PGTM. A C3H1-type zinc finger spans residues 27 to 56; it reads NAKDTLCRNVTIYGRCRYEDKGCAFNHDPH. The segment covering 74–96 has biased composition (polar residues); sequence DSPSFTPSILSSNGSSPTSQSAT. The span at 115–131 shows a compositional bias: low complexity; that stretch reads PRSISSRSNSSTPTTRP. Positions 265-525 are pseudokinase domain; it reads QTLPNTQLPA…NIDIFITGIS (261 aa). ATP is bound by residues R317, 366-373, and 425-426; these read DYHPLSKT and SK. A coiled-coil region spans residues 526–564; the sequence is STLMSTFDSALHLDDQLTSDLSRELENGRLVRLMTKLNF. Residues 565-664 form a knob domain region; the sequence is VNERPEYEHD…LKPSASRRLH (100 aa).

Belongs to the protein kinase superfamily. PAN3 family. In terms of assembly, homodimer. Forms a heterotrimer with a catalytic subunit pan2 to form the poly(A)-nuclease (PAN) deadenylation complex. Interacts (via PAM-2 motif) with poly(A)-binding protein pab1 (via PABC domain), conferring substrate specificity of the enzyme complex.

It is found in the cytoplasm. Its function is as follows. Regulatory subunit of the poly(A)-nuclease (PAN) deadenylation complex, one of two cytoplasmic mRNA deadenylases involved in mRNA turnover. PAN specifically shortens poly(A) tails of RNA and the activity is stimulated by poly(A)-binding protein pab1. PAN deadenylation is followed by rapid degradation of the shortened mRNA tails by the CCR4-NOT complex. Deadenylated mRNAs are then degraded by two alternative mechanisms, namely exosome-mediated 3'-5' exonucleolytic degradation, or deadenylation-dependent mRNA decaping and subsequent 5'-3' exonucleolytic degradation by xrn1. May also be involved in post-transcriptional maturation of mRNA poly(A) tails. pan3 acts as a positive regulator for PAN activity, recruiting the catalytic subunit pan2 to mRNA via its interaction with RNA and with pab1. The chain is PAN2-PAN3 deadenylation complex subunit PAN3 from Aspergillus niger (strain ATCC MYA-4892 / CBS 513.88 / FGSC A1513).